We begin with the raw amino-acid sequence, 149 residues long: Potassium binding protein Kbp (149 aa).

Residues 23–91 (DKDDQAKKVQ…SVDDQVKTAT (69 aa)) form the BON domain. Residues 97-146 (QFYTVKSGDTLSAISKQVYGNANLYNKIFEANKPMLKSPDKIYPGQVLRI) form the LysM domain.

The protein resides in the cytoplasm. In terms of biological role, highly specific potassium binding protein that is required for normal growth in the presence of high levels of external K(+). May act as a sensor of cytoplasmic K(+) concentration. This Escherichia coli O6:H1 (strain CFT073 / ATCC 700928 / UPEC) protein is Potassium binding protein Kbp.